Consider the following 266-residue polypeptide: Putative carbamate hydrolase RutD (266 aa).

Belongs to the AB hydrolase superfamily. Hydrolase RutD family.

The enzyme catalyses carbamate + 2 H(+) = NH4(+) + CO2. In terms of biological role, involved in pyrimidine catabolism. May facilitate the hydrolysis of carbamate, a reaction that can also occur spontaneously. The polypeptide is Putative carbamate hydrolase RutD (Escherichia coli (strain B / BL21-DE3)).